A 149-amino-acid polypeptide reads, in one-letter code: Glutamate mutase sigma subunit (149 aa).

The B12-binding domain occupies 3 to 140 (KATLVIGVIG…AHDINQRHDV (138 aa)). Adenosylcob(III)alamin-binding positions include 13–17 (ADCHA), H16, 61–63 (SSI), and 93–97 (NLVVG).

The protein belongs to the methylaspartate mutase GlmS subunit family. Heterotetramer composed of 2 epsilon subunits (GlmE) and 2 sigma subunits (GlmS). GlmE exists as a homodimer and GlmS as a monomer. The cofactor is adenosylcob(III)alamin.

The catalysed reaction is (2S,3S)-3-methyl-L-aspartate = L-glutamate. Its pathway is amino-acid degradation; L-glutamate degradation via mesaconate pathway; acetate and pyruvate from L-glutamate: step 1/4. In terms of biological role, catalyzes the carbon skeleton rearrangement of L-glutamate to L-threo-3-methylaspartate ((2S,3S)-3-methylaspartate). The sequence is that of Glutamate mutase sigma subunit from Escherichia coli O157:H7.